The primary structure comprises 184 residues: ATP synthase subunit b, chloroplastic (184 aa).

Residues 27 to 49 traverse the membrane as a helical segment; sequence LATNPINLSVVFGVLIFFGKGVL.

The protein belongs to the ATPase B chain family. As to quaternary structure, F-type ATPases have 2 components, F(1) - the catalytic core - and F(0) - the membrane proton channel. F(1) has five subunits: alpha(3), beta(3), gamma(1), delta(1), epsilon(1). F(0) has four main subunits: a(1), b(1), b'(1) and c(10-14). The alpha and beta chains form an alternating ring which encloses part of the gamma chain. F(1) is attached to F(0) by a central stalk formed by the gamma and epsilon chains, while a peripheral stalk is formed by the delta, b and b' chains.

It localises to the plastid. The protein localises to the chloroplast thylakoid membrane. In terms of biological role, f(1)F(0) ATP synthase produces ATP from ADP in the presence of a proton or sodium gradient. F-type ATPases consist of two structural domains, F(1) containing the extramembraneous catalytic core and F(0) containing the membrane proton channel, linked together by a central stalk and a peripheral stalk. During catalysis, ATP synthesis in the catalytic domain of F(1) is coupled via a rotary mechanism of the central stalk subunits to proton translocation. Its function is as follows. Component of the F(0) channel, it forms part of the peripheral stalk, linking F(1) to F(0). This is ATP synthase subunit b, chloroplastic from Lobularia maritima (Sweet alyssum).